The primary structure comprises 103 residues: c-Myc-binding protein (103 aa).

The protein belongs to the AMY1 family. In terms of assembly, binds via its C-terminal region to the N-terminal region of MYC. Associates with AKAP1/S-AKAP84. Interacts with MYCBPAP. Interacts with CFAP91. As to expression, highly expressed in heart, placenta, pancreas, skeletal muscle and kidney. Also present at low levels in lung.

The protein resides in the cytoplasm. It is found in the nucleus. It localises to the mitochondrion. May control the transcriptional activity of MYC. Stimulates the activation of E box-dependent transcription by MYC. This is c-Myc-binding protein from Homo sapiens (Human).